Here is a 335-residue protein sequence, read N- to C-terminus: MQALVNKIWYQGHPLRWLLLPLSALFAFITAFRRSLFRLGIKSQTTLPVPVIVVGNITVGGSGKTPTVIYLIELLRNQGFNPGVISRGYGAQFQGVKVVTVKDAATDVGDEPAMIVARTGVPMVVGAKRVETAKALLTQFAVDVIICDDGLQHYALGRDIELVVIDGKRGLGNRNLLPAGPLREGEWRLNQVDFVIVNGGPAVANQYEMQLRPCAVLPVSPAVTAEFDSTQPLVAMAGIGHPARFFETLTQQGYQVALSHSFDDHQAYDKRQLCELAASRPLMMTEKDAVKCRDFAQENWWYLAVDAKLSPQFDQQLLSRLRSVAAAKKGKSHGV.

ATP is bound at residue Thr-58 to Thr-65.

This sequence belongs to the LpxK family.

The catalysed reaction is a lipid A disaccharide + ATP = a lipid IVA + ADP + H(+). Its pathway is glycolipid biosynthesis; lipid IV(A) biosynthesis; lipid IV(A) from (3R)-3-hydroxytetradecanoyl-[acyl-carrier-protein] and UDP-N-acetyl-alpha-D-glucosamine: step 6/6. Its function is as follows. Transfers the gamma-phosphate of ATP to the 4'-position of a tetraacyldisaccharide 1-phosphate intermediate (termed DS-1-P) to form tetraacyldisaccharide 1,4'-bis-phosphate (lipid IVA). This is Tetraacyldisaccharide 4'-kinase from Shewanella oneidensis (strain ATCC 700550 / JCM 31522 / CIP 106686 / LMG 19005 / NCIMB 14063 / MR-1).